Reading from the N-terminus, the 336-residue chain is Fructose-1,6-bisphosphatase class 1 (336 aa).

Residues glutamate 90, aspartate 112, leucine 114, and aspartate 115 each contribute to the Mg(2+) site. Substrate contacts are provided by residues 115–118 (DGSS), asparagine 211, and lysine 277. Glutamate 283 is a binding site for Mg(2+).

Belongs to the FBPase class 1 family. In terms of assembly, homotetramer. Mg(2+) is required as a cofactor.

It localises to the cytoplasm. The catalysed reaction is beta-D-fructose 1,6-bisphosphate + H2O = beta-D-fructose 6-phosphate + phosphate. Its pathway is carbohydrate biosynthesis; gluconeogenesis. This Pseudomonas syringae pv. syringae (strain B728a) protein is Fructose-1,6-bisphosphatase class 1.